We begin with the raw amino-acid sequence, 56 residues long: MAVQQNKKTRSCRGMRRSHDALTTATVSVDKVSGETHLRHHVTADGFYRGRKVIAK.

It belongs to the bacterial ribosomal protein bL32 family.

The protein is Large ribosomal subunit protein bL32 of Edwardsiella ictaluri (strain 93-146).